Here is a 998-residue protein sequence, read N- to C-terminus: Type II restriction enzyme and methyltransferase RM.Eco57I (998 aa).

In the C-terminal section; belongs to the N(4)/N(6)-methyltransferase family. In terms of assembly, monomer.

It carries out the reaction Endonucleolytic cleavage of DNA to give specific double-stranded fragments with terminal 5'-phosphates.. It catalyses the reaction a 2'-deoxyadenosine in DNA + S-adenosyl-L-methionine = an N(6)-methyl-2'-deoxyadenosine in DNA + S-adenosyl-L-homocysteine + H(+). With respect to regulation, mg(2+) is absolutely required for DNA restriction. In terms of biological role, an E, G and S subtype restriction enzyme that recognizes the (non-palindromic) double-stranded sequence 5'-CTGAAG-3' and cleaves respectively 22 bases after C-1 and 14 bases before C'-1; cleavage of lambda DNA is never complete. Also acts as a methylase that causes specific methylation on A-5 in 5'-CTGAAG-3', the other strand is methylated by the M.Eco57I methylase. This is Type II restriction enzyme and methyltransferase RM.Eco57I from Escherichia coli.